Here is a 294-residue protein sequence, read N- to C-terminus: MYB-like transcription factor ODO1 (294 aa).

HTH myb-type domains follow at residues 9–61 and 62–116; these read KLGV…TNYL and RPDL…KKKL. 2 DNA-binding regions (H-T-H motif) span residues 37-61 and 89-112; these read WRAV…TNYL and WSKI…NTHI. Disordered stretches follow at residues 128 to 152 and 171 to 191; these read PLKK…NGHQ and TEFD…NSSC.

As to expression, restricted to the petals, with the highest expression in the limb, probably in both epidermal and mesophyll cell layers.

The protein resides in the nucleus. Functionally, R2R3 MYB-type transcription factor controlling the production of volatile organic compounds (VOCs), including floral volatile benzenoids and phenylpropanoids (FVBP), in flowers of fragrant cultivars (e.g. cv. Mitchell and cv. V26) by regulating the shikimate pathway, via the activation of several genes (e.g. EPSPS, ADT1, PAL1, CFAT and CCoAOMT1). This scent, mostly produced in the evening and night by the petals, attracts the pollinators (e.g. the night-active hawkmoth pollinator Manduca sexta). Promotes the expression of ABCG1 in petals three hours before the onset of volatile scent emission. Anthocyanins production is not controlled by ODO1 as color and scent are produced at different stages of development. Seems to trigger a negative feed-back loop that represses the expression of EOBI. This Petunia hybrida (Petunia) protein is MYB-like transcription factor ODO1.